A 169-amino-acid chain; its full sequence is Ribosome maturation factor RimM (169 aa).

A PRC barrel domain is found at Pro93–Leu167.

This sequence belongs to the RimM family. In terms of assembly, binds ribosomal protein uS19.

The protein resides in the cytoplasm. An accessory protein needed during the final step in the assembly of 30S ribosomal subunit, possibly for assembly of the head region. Essential for efficient processing of 16S rRNA. May be needed both before and after RbfA during the maturation of 16S rRNA. It has affinity for free ribosomal 30S subunits but not for 70S ribosomes. The protein is Ribosome maturation factor RimM of Ruminiclostridium cellulolyticum (strain ATCC 35319 / DSM 5812 / JCM 6584 / H10) (Clostridium cellulolyticum).